Reading from the N-terminus, the 430-residue chain is Probable FAD-dependent monooxygenase (430 aa).

A signal peptide spans 1-23; sequence MGSTSTPPHVLIIGAGITGLALA. An FAD-binding site is contributed by 9-37; sequence HVLIIGAGITGLALAQALRKHGVSFAVYE. N-linked (GlcNAc...) asparagine glycans are attached at residues asparagine 130 and asparagine 151. 307–330 is an FAD binding site; the sequence is LEDWPTPPKGSWSNLGGTATLVGD.

FAD is required as a cofactor.

The protein is Probable FAD-dependent monooxygenase of Arthroderma benhamiae (strain ATCC MYA-4681 / CBS 112371) (Trichophyton mentagrophytes).